We begin with the raw amino-acid sequence, 115 residues long: Large ribosomal subunit protein bL20 (115 aa).

It belongs to the bacterial ribosomal protein bL20 family.

In terms of biological role, binds directly to 23S ribosomal RNA and is necessary for the in vitro assembly process of the 50S ribosomal subunit. It is not involved in the protein synthesizing functions of that subunit. The protein is Large ribosomal subunit protein bL20 of Chlorobium phaeobacteroides (strain DSM 266 / SMG 266 / 2430).